The chain runs to 512 residues: ETS translocation variant 3 (512 aa).

A DNA-binding region (ETS) is located at residues 35–116 (IQLWHFILEL…KGKRFTYKFN (82 aa)). The segment at 138 to 196 (QSAPPVPTASSRFHFPPLDTHSPTSDVQPGRFSASSLTASGQESSNGTDRKAELSXLED) is disordered. Phosphoserine occurs at positions 139, 159, and 315. Positions 158-184 (HSPTSDVQPGRFSASSLTASGQESSNG) are enriched in polar residues. Positions 341–512 (QFSIKLQPPP…QGLATAAADA (172 aa)) are disordered. The segment covering 380–406 (IKVEPASEKDAESLRQSAREKEEHTXE) has biased composition (basic and acidic residues). Lys-381 is covalently cross-linked (Glycyl lysine isopeptide (Lys-Gly) (interchain with G-Cter in SUMO2)). At Lys-388 the chain carries N6-acetyllysine; alternate. Residue Lys-388 forms a Glycyl lysine isopeptide (Lys-Gly) (interchain with G-Cter in SUMO2); alternate linkage. Acidic residues predominate over residues 443–452 (EPLEVTEDIE). 2 stretches are compositionally biased toward basic and acidic residues: residues 453–468 (DRPG…KEDA) and 479–491 (RWND…ELSK).

Belongs to the ETS family.

Its subcellular location is the nucleus. In terms of biological role, transcriptional repressor that contribute to growth arrest during terminal macrophage differentiation by repressing target genes involved in Ras-dependent proliferation. Represses MMP1 promoter activity. This is ETS translocation variant 3 (ETV3) from Ateles geoffroyi (Black-handed spider monkey).